The sequence spans 79 residues: Large ribosomal subunit protein uL24 (79 aa).

Belongs to the universal ribosomal protein uL24 family. As to quaternary structure, part of the 50S ribosomal subunit.

Functionally, one of two assembly initiator proteins, it binds directly to the 5'-end of the 23S rRNA, where it nucleates assembly of the 50S subunit. One of the proteins that surrounds the polypeptide exit tunnel on the outside of the subunit. The chain is Large ribosomal subunit protein uL24 from Aliarcobacter butzleri (strain RM4018) (Arcobacter butzleri).